The following is a 568-amino-acid chain: TNF receptor-associated factor 3 (568 aa).

The tract at residues 1–28 is disordered; it reads MESSKKMDSPGALQTNPPLKLHTDRSAG. The residue at position 9 (Ser-9) is a Phosphoserine. Cys-56 is covalently cross-linked (Glycyl cysteine thioester (Cys-Gly) (interchain with G-Cter in ubiquitin)). The segment at 68–77 adopts an RING-type zinc-finger fold; it reads CGHRFCESCM. Cys-124 is covalently cross-linked (Glycyl cysteine thioester (Cys-Gly) (interchain with G-Cter in ubiquitin)). 2 consecutive TRAF-type zinc fingers follow at residues 135–190 and 191–249; these read VHLK…IALQ and KHED…QQIK. Lys-168 participates in a covalent cross-link: Glycyl lysine isopeptide (Lys-Gly) (interchain with G-Cter in ubiquitin). Residues 267-338 adopt a coiled-coil conformation; it reads SNSLEKKVSL…KLKELDKEIR (72 aa). Residue Lys-329 forms a Glycyl lysine isopeptide (Lys-Gly) (interchain with G-Cter in ubiquitin) linkage. Residues 392-415 are (Microbial infection) Interaction with glycoprotein N of Andes and New York hantaviruses; the sequence is LSVHDIRLADMDLRFQVLETASYN. Residues 415–560 form the MATH domain; the sequence is NGVLIWKIRD…DDTIFIKVIV (146 aa).

The protein belongs to the TNF receptor-associated factor family. A subfamily. As to quaternary structure, homotrimer. Heterotrimer with TRAF2 and TRAF5. Interacts with LTBR/TNFRSF3, TNFRSF4, TNFRSF5/CD40, TNFRSF8/CD30, TNFRSF13C TNFRSF17/BCMA, TLR4 and EDAR. Interacts with MAP3K5, MAP3K14, TRAIP/TRIP, TDP2/TTRAP, TANK/ITRAF and TRAF3IP1. Interaction with TNFRSF5/CD40 is modulated by TANK/ITRAF, which competes for the same binding site. Interacts with TICAM1. Interacts with TRAFD1. Interacts with OTUB1, OTUB2 and OTUD5. Interacts with RNF216, OPTN and TBK1. Identified in a complex with TRAF2, MAP3K14 and BIRC3. Interacts with BIRC2 and BIRC3. Upon exposure to bacterial lipopolysaccharide (LPS), recruited to a transient complex containing TLR4, TRAF3, TRAF6, IKBKG, MAP3K7, MYD88, TICAM1, BIRC2, BIRC3 and UBE2N. Interacts (via RING-type zinc finger domain) with SRC. Interacts with CARD14. Interacts (via MATH domain) with PTPN22; the interaction promotes TRAF3 polyubiquitination. Interacts with MAVS. Directly interacts with DDX3X; this interaction stimulates TRAF3 'Lys-63' ubiquitination. Interacts with IRF3. Interacts with IKBKE in the course of Sendai virus infection. Interacts with TRIM35. Interacts with GAPDH; promoting TRAF3 ubiquitination. Interacts with PPP3CA and PPP3CB. Interacts with ATP1B1; promoting TRAF3 ubiquitination. Interacts with RALGDS. Interacts with FBXO11. In terms of assembly, (Microbial infection) Interacts (via N-terminus) with New York hantavirus glycoprotein N (via C-terminus); this interaction inhibits the formation of TRAF3-TBK1 complexes. (Microbial infection) Interacts with Andes hantavirus glycoprotein N (via C-terminus); this interaction inhibits the formation of TRAF3-TBK1 complexes. As to quaternary structure, (Microbial infection) Interacts with Tula hantavirus glycoprotein N (via C-terminus); this interaction inhibits the formation of TRAF3-TBK1 complexes. In terms of assembly, (Microbial infection) Interacts with Epstein-Barr virus protein LMP1. In terms of processing, undergoes 'Lys-48'-linked polyubiquitination, leading to its proteasomal degradation in response to signaling by TNFSF13B, TLR4 or through CD40. 'Lys-48'-linked polyubiquitinated form is deubiquitinated by OTUD7B, preventing TRAF3 proteolysis and over-activation of non-canonical NF-kappa-B. Undergoes 'Lys-63'-linked ubiquitination during early stages of virus infection, and 'Lys-48'-linked ubiquitination during later stages. Undergoes both 'Lys-48'-linked and 'Lys-63'-linked ubiquitination in response to TLR3 and TLR4 signaling. 'Lys-63'-linked ubiquitination can be mediated by TRIM35. Deubiquitinated by OTUB1, OTUB2 and OTUD5. Undergoes 'Lys-63'-linked deubiquitination by MYSM1 to terminate the pattern-recognition receptors/PRRs pathways. Also undergoes 'Lys-29'-linked ubiquitination on Cys-56 and Cys-124 by NEDD4L; leading to increased 'Lys-48'- and 'Lys-63'-linked ubiquitination as well as increased binding to TBK1. TLR4 signals emanating from bacteria containing vesicles trigger 'Lys-33'-linked polyubiquitination that promotes the assembly of the exocyst complex thereby connecting innate immune signaling to the cellular trafficking apparatus. Deubiquitinated by USP25 during viral infection, leading to TRAF3 stabilization and type I interferon production. Ubiquitinated at Lys-329 by the SCF(FBXL2) complex, leading to its degradation by the proteasome. 'Lys-63'-linked ubiquitination by FBXO11 in a NEDD8-dependent manner promotes the amplification of IFN-I signaling. (Microbial infection) Cleaved by enterovirus D68 protease 2A; leading to inhibition of NF-kappa-B or IFN-beta triggered by TRAF3.

It is found in the cytoplasm. The protein localises to the endosome. Its subcellular location is the mitochondrion. The enzyme catalyses S-ubiquitinyl-[E2 ubiquitin-conjugating enzyme]-L-cysteine + [acceptor protein]-L-lysine = [E2 ubiquitin-conjugating enzyme]-L-cysteine + N(6)-ubiquitinyl-[acceptor protein]-L-lysine.. In terms of biological role, cytoplasmic E3 ubiquitin ligase that regulates various signaling pathways, such as the NF-kappa-B, mitogen-activated protein kinase (MAPK) and interferon regulatory factor (IRF) pathways, and thus controls a lot of biological processes in both immune and non-immune cell types. In TLR and RLR signaling pathways, acts as an E3 ubiquitin ligase promoting the synthesis of 'Lys-63'-linked polyubiquitin chains on several substrates such as ASC that lead to the activation of the type I interferon response or the inflammasome. Following the activation of certain TLRs such as TLR4, acts as a negative NF-kappa-B regulator, possibly to avoid unregulated inflammatory response, and its degradation via 'Lys-48'-linked polyubiquitination is required for MAPK activation and production of inflammatory cytokines. Alternatively, when TLR4 orchestrates bacterial expulsion, TRAF3 undergoes 'Lys-33'-linked polyubiquitination and subsequently binds to RALGDS, mobilizing the exocyst complex to rapidly expel intracellular bacteria back for clearance. Also acts as a constitutive negative regulator of the alternative NF-kappa-B pathway, which controls B-cell survival and lymphoid organ development. Required for normal antibody isotype switching from IgM to IgG. Plays a role T-cell dependent immune responses. Down-regulates proteolytic processing of NFKB2, and thereby inhibits non-canonical activation of NF-kappa-B. Promotes ubiquitination and proteasomal degradation of MAP3K14. This is TNF receptor-associated factor 3 from Homo sapiens (Human).